The sequence spans 176 residues: Adenine phosphoribosyltransferase (176 aa).

It belongs to the purine/pyrimidine phosphoribosyltransferase family. As to quaternary structure, homodimer.

The protein localises to the cytoplasm. The catalysed reaction is AMP + diphosphate = 5-phospho-alpha-D-ribose 1-diphosphate + adenine. Its pathway is purine metabolism; AMP biosynthesis via salvage pathway; AMP from adenine: step 1/1. Its function is as follows. Catalyzes a salvage reaction resulting in the formation of AMP, that is energically less costly than de novo synthesis. The sequence is that of Adenine phosphoribosyltransferase from Bacteroides thetaiotaomicron (strain ATCC 29148 / DSM 2079 / JCM 5827 / CCUG 10774 / NCTC 10582 / VPI-5482 / E50).